The following is a 373-amino-acid chain: tRNA N6-adenosine threonylcarbamoyltransferase (373 aa).

The a divalent metal cation site is built by His133, His137, and Tyr154. Residues 154–158 (YVSGG), Asp186, Gly201, Glu205, and Asn302 each bind substrate. Asp331 provides a ligand contact to a divalent metal cation.

It belongs to the KAE1 / TsaD family. In terms of assembly, component of the EKC/KEOPS complex composed of at least BUD32, CGI121, GON7, KAE1 and PCC1; the whole complex dimerizes. Requires a divalent metal cation as cofactor.

It localises to the cytoplasm. The protein localises to the nucleus. It catalyses the reaction L-threonylcarbamoyladenylate + adenosine(37) in tRNA = N(6)-L-threonylcarbamoyladenosine(37) in tRNA + AMP + H(+). In terms of biological role, component of the EKC/KEOPS complex that is required for the formation of a threonylcarbamoyl group on adenosine at position 37 (t(6)A37) in tRNAs that read codons beginning with adenine. The complex is probably involved in the transfer of the threonylcarbamoyl moiety of threonylcarbamoyl-AMP (TC-AMP) to the N6 group of A37. KAE1 likely plays a direct catalytic role in this reaction, but requires other protein(s) of the complex to fulfill this activity. The EKC/KEOPS complex also promotes both telomere uncapping and telomere elongation. The complex is required for efficient recruitment of transcriptional coactivators. The polypeptide is tRNA N6-adenosine threonylcarbamoyltransferase (Debaryomyces hansenii (strain ATCC 36239 / CBS 767 / BCRC 21394 / JCM 1990 / NBRC 0083 / IGC 2968) (Yeast)).